Reading from the N-terminus, the 119-residue chain is Large ribosomal subunit protein uL24 (119 aa).

Belongs to the universal ribosomal protein uL24 family. Part of the 50S ribosomal subunit.

In terms of biological role, one of two assembly initiator proteins, it binds directly to the 5'-end of the 23S rRNA, where it nucleates assembly of the 50S subunit. Its function is as follows. One of the proteins that surrounds the polypeptide exit tunnel on the outside of the subunit. The sequence is that of Large ribosomal subunit protein uL24 from Leptospira interrogans serogroup Icterohaemorrhagiae serovar copenhageni (strain Fiocruz L1-130).